Consider the following 118-residue polypeptide: Hydrogenase maturation factor HypA (118 aa).

Histidine 2 serves as a coordination point for Ni(2+). 4 residues coordinate Zn(2+): cysteine 73, cysteine 76, cysteine 89, and cysteine 92.

The protein belongs to the HypA/HybF family.

Functionally, involved in the maturation of [NiFe] hydrogenases. Required for nickel insertion into the metal center of the hydrogenase. The polypeptide is Hydrogenase maturation factor HypA (Shewanella sp. (strain MR-7)).